The sequence spans 209 residues: MADFYYLPGSSPCRSVIMTAKAVGVELNKKLLNLRAGEHLKPEFLKINPQHTIPTLVDNGFALWESRAIQVYLVEKYGKTDSLYPKCPKKRAVINQRLYFDMGTLYQSFANYYYPQVFAKAPADPEAFKKIESAFEFLNTFLEGQEYAAGDSLTVADIALVASVSTFEVAGFEISKYANVNKWYENAKKVTPGWEENWAGCLEFKKFFE.

In terms of domain architecture, GST N-terminal spans 1–81 (MADFYYLPGS…YLVEKYGKTD (81 aa)). Glutathione is bound by residues Ser-10, 51-53 (HTI), and 65-67 (ESR). The 123-residue stretch at 87–209 (CPKKRAVINQ…GCLEFKKFFE (123 aa)) folds into the GST C-terminal domain.

Belongs to the GST superfamily. Theta family. Homodimer.

The catalysed reaction is RX + glutathione = an S-substituted glutathione + a halide anion + H(+). It carries out the reaction 1,1,1-trichloro-2,2-bis(4-chlorophenyl)ethane = 1,1-dichloro-2,2-bis(4-chlorophenyl)ethylene + chloride + H(+). In terms of biological role, conjugation of reduced glutathione to a wide number of exogenous and endogenous hydrophobic electrophiles. Has DDT dehydrochlorinase activity. In Drosophila sechellia (Fruit fly), this protein is Glutathione S-transferase 1-1 (GstD1).